Consider the following 290-residue polypeptide: Ribosomal RNA small subunit methyltransferase A (290 aa).

S-adenosyl-L-methionine-binding residues include asparagine 27, leucine 29, glycine 54, glutamate 75, aspartate 100, and asparagine 125.

Belongs to the class I-like SAM-binding methyltransferase superfamily. rRNA adenine N(6)-methyltransferase family. RsmA subfamily.

The protein localises to the cytoplasm. The catalysed reaction is adenosine(1518)/adenosine(1519) in 16S rRNA + 4 S-adenosyl-L-methionine = N(6)-dimethyladenosine(1518)/N(6)-dimethyladenosine(1519) in 16S rRNA + 4 S-adenosyl-L-homocysteine + 4 H(+). In terms of biological role, specifically dimethylates two adjacent adenosines (A1518 and A1519) in the loop of a conserved hairpin near the 3'-end of 16S rRNA in the 30S particle. May play a critical role in biogenesis of 30S subunits. In Streptococcus pneumoniae (strain P1031), this protein is Ribosomal RNA small subunit methyltransferase A.